Consider the following 341-residue polypeptide: N-acetyl-gamma-glutamyl-phosphate reductase (341 aa).

C148 is a catalytic residue.

Belongs to the NAGSA dehydrogenase family. Type 1 subfamily.

It localises to the cytoplasm. The catalysed reaction is N-acetyl-L-glutamate 5-semialdehyde + phosphate + NADP(+) = N-acetyl-L-glutamyl 5-phosphate + NADPH + H(+). It functions in the pathway amino-acid biosynthesis; L-arginine biosynthesis; N(2)-acetyl-L-ornithine from L-glutamate: step 3/4. In terms of biological role, catalyzes the NADPH-dependent reduction of N-acetyl-5-glutamyl phosphate to yield N-acetyl-L-glutamate 5-semialdehyde. The polypeptide is N-acetyl-gamma-glutamyl-phosphate reductase (Pseudothermotoga lettingae (strain ATCC BAA-301 / DSM 14385 / NBRC 107922 / TMO) (Thermotoga lettingae)).